The sequence spans 1216 residues: ATP-dependent helicase/nuclease subunit A (1216 aa).

One can recognise a UvrD-like helicase ATP-binding domain in the interval 26–488 (QKKTAEQIEA…ILLKANFRSS (463 aa)). 47-54 (ASAGSGKT) contacts ATP. A UvrD-like helicase C-terminal domain is found at 515–802 (KHQLVFANTK…ELMTIHKSKG (288 aa)).

Belongs to the helicase family. AddA subfamily. Heterodimer of AddA and AddB/RexB. The cofactor is Mg(2+).

It carries out the reaction Couples ATP hydrolysis with the unwinding of duplex DNA by translocating in the 3'-5' direction.. It catalyses the reaction ATP + H2O = ADP + phosphate + H(+). Functionally, the heterodimer acts as both an ATP-dependent DNA helicase and an ATP-dependent, dual-direction single-stranded exonuclease. Recognizes the chi site generating a DNA molecule suitable for the initiation of homologous recombination. The AddA nuclease domain is required for chi fragment generation; this subunit has the helicase and 3' -&gt; 5' nuclease activities. The polypeptide is ATP-dependent helicase/nuclease subunit A (Streptococcus pneumoniae (strain ATCC 700669 / Spain 23F-1)).